We begin with the raw amino-acid sequence, 133 residues long: Small ribosomal subunit protein uS8 (133 aa).

It belongs to the universal ribosomal protein uS8 family. As to quaternary structure, part of the 30S ribosomal subunit. Contacts proteins S5 and S12.

Its function is as follows. One of the primary rRNA binding proteins, it binds directly to 16S rRNA central domain where it helps coordinate assembly of the platform of the 30S subunit. In Chlamydia trachomatis serovar L2b (strain UCH-1/proctitis), this protein is Small ribosomal subunit protein uS8.